Here is a 229-residue protein sequence, read N- to C-terminus: ATP synthase subunit a (229 aa).

A run of 6 helical transmembrane segments spans residues 16–36 (YAHV…GAAA), 81–101 (YIPF…LGMI), 110–130 (NMNT…FQGV), 142–162 (FMGP…VSHI), 175–195 (VMMG…IGVP), and 196–216 (IPFY…FTLL).

The protein belongs to the ATPase A chain family. As to quaternary structure, F-type ATPases have 2 components, CF(1) - the catalytic core - and CF(0) - the membrane proton channel. CF(1) has five subunits: alpha(3), beta(3), gamma(1), delta(1), epsilon(1). CF(0) has three main subunits: a(1), b(2) and c(9-12). The alpha and beta chains form an alternating ring which encloses part of the gamma chain. CF(1) is attached to CF(0) by a central stalk formed by the gamma and epsilon chains, while a peripheral stalk is formed by the delta and b chains.

The protein resides in the cell inner membrane. Its function is as follows. Key component of the proton channel; it plays a direct role in the translocation of protons across the membrane. This is ATP synthase subunit a from Bdellovibrio bacteriovorus (strain ATCC 15356 / DSM 50701 / NCIMB 9529 / HD100).